The sequence spans 70 residues: Ubiquinol-cytochrome c reductase complex assembly factor 5 (70 aa).

Residues 1–19 (MFTRAQVRRILQRVPGKQR) are Mitochondrial matrix-facing. The chain crosses the membrane as a helical span at residues 20 to 41 (FGIYRFLPFFFVLGGTMEWIMI). Over 42 to 70 (KVRVGQETFYDVYRRKASERQYQRRLEDE) the chain is Mitochondrial intermembrane.

This sequence belongs to the UQCC5 family. In terms of assembly, associates with the mitochondrial ribosome. Interacts with UQCC6. Interacts with MT-CYB; interacts with newly synthesizes MT-CYB. Forms a complex, named COMB/coordinator of mitochondrial CYTB biogenesis, composed of UQCC1, UQCC2, UQCC4, UQCC5 and UQCC6; regulates MT-CYB synthesis and promotes its membrane insertion.

It localises to the mitochondrion inner membrane. In terms of biological role, required for the assembly and stability of the mitochondrial ubiquinol-cytochrome c reductase complex (complex III (CIII) or cytochrome b-c1 complex), a multisubunit transmembrane complex that is part of the mitochondrial electron transport chain (ETC) which drives oxidative phosphorylation. Mediates early complex III biogenesis. Participates in regulating the levels of electron transport chain proteins, and therefore energy supply, in response to changes in energy demand. Also involved in the first steps of cytochrome c oxidase complex (complex IV) assembly. The sequence is that of Ubiquinol-cytochrome c reductase complex assembly factor 5 from Homo sapiens (Human).